The following is a 52-amino-acid chain: MGANKTLNMKKRFGRKIKQNRPLPNWYRYKSDTNIRYNSKRRNWRRTKLKIY.

This sequence belongs to the eukaryotic ribosomal protein eL39 family.

The protein is Large ribosomal subunit protein eL39 (RPL39) of Tetrahymena thermophila (strain SB210).